A 157-amino-acid chain; its full sequence is Small ribosomal subunit protein uS7 (157 aa).

The protein belongs to the universal ribosomal protein uS7 family. As to quaternary structure, part of the 30S ribosomal subunit. Contacts proteins S9 and S11.

Functionally, one of the primary rRNA binding proteins, it binds directly to 16S rRNA where it nucleates assembly of the head domain of the 30S subunit. Is located at the subunit interface close to the decoding center, probably blocks exit of the E-site tRNA. This Rhodopirellula baltica (strain DSM 10527 / NCIMB 13988 / SH1) protein is Small ribosomal subunit protein uS7.